A 938-amino-acid chain; its full sequence is Protein SEY1 (938 aa).

A disordered region spans residues 1-159; sequence MTSQSHGAPP…QKSAKSTPGS (159 aa). At 1–839 the chain is on the cytoplasmic side; that stretch reads MTSQSHGAPP…KRSTIQSTTQ (839 aa). The segment covering 33 to 45 has biased composition (low complexity); that stretch reads SVSSSHSSHSPVT. Residues 74-94 show a composition bias toward pro residues; the sequence is IAAPEPIAAPEPIPAPEPIAA. Over residues 100-118 the composition is skewed to basic and acidic residues; the sequence is LKSEHKPVEREHKPVERKP. Positions 146 to 158 are enriched in polar residues; the sequence is VPTSQKSAKSTPG. The region spanning 192–423 is the GB1/RHD3-type G domain; sequence GLDYHVVAVF…DPNYVFKPVY (232 aa). GTP is bound at residue 202–209; it reads GSQSTGKS. Positions 603 to 630 form a coiled coil; the sequence is SYDDTLAALEQELDTLRDHKSKVEIDRL. The chain crosses the membrane as a helical span at residues 840–860; that stretch reads IPLYMYGLLLLLGWNEIMAVL. Topologically, residues 861–863 are lumenal; that stretch reads RSP. A helical membrane pass occupies residues 864 to 884; that stretch reads VYFMFLLVAAGAAYVIHTLHL. The Cytoplasmic segment spans residues 885 to 938; sequence WGPLTHMTNTMIAEATDMAKAKLKQVLNEAPTGETREREAPVGSSRDDVELKDL. The interval 911–938 is disordered; the sequence is LNEAPTGETREREAPVGSSRDDVELKDL. Basic and acidic residues predominate over residues 918–938; it reads ETREREAPVGSSRDDVELKDL.

This sequence belongs to the TRAFAC class dynamin-like GTPase superfamily. GB1/RHD3 GTPase family. RHD3 subfamily.

The protein resides in the endoplasmic reticulum membrane. Cooperates with the reticulon proteins and tubule-shaping DP1 family proteins to generate and maintain the structure of the tubular endoplasmic reticulum network. Has GTPase activity, which is required for its function in ER organization. The polypeptide is Protein SEY1 (Yarrowia lipolytica (strain CLIB 122 / E 150) (Yeast)).